The following is a 139-amino-acid chain: Ribulose bisphosphate carboxylase small subunit, plasmid (139 aa).

It belongs to the RuBisCO small chain family. In terms of assembly, heterohexadecamer of 8 large and 8 small subunits.

Its function is as follows. RuBisCO catalyzes two reactions: the carboxylation of D-ribulose 1,5-bisphosphate, the primary event in carbon dioxide fixation, as well as the oxidative fragmentation of the pentose substrate. Both reactions occur simultaneously and in competition at the same active site. Although the small subunit is not catalytic it is essential for maximal activity. In Cupriavidus necator (strain ATCC 17699 / DSM 428 / KCTC 22496 / NCIMB 10442 / H16 / Stanier 337) (Ralstonia eutropha), this protein is Ribulose bisphosphate carboxylase small subunit, plasmid.